The primary structure comprises 251 residues: Imidazole glycerol phosphate synthase subunit HisF (251 aa).

Residues Asp11 and Asp130 contribute to the active site.

The protein belongs to the HisA/HisF family. As to quaternary structure, heterodimer of HisH and HisF.

It is found in the cytoplasm. It carries out the reaction 5-[(5-phospho-1-deoxy-D-ribulos-1-ylimino)methylamino]-1-(5-phospho-beta-D-ribosyl)imidazole-4-carboxamide + L-glutamine = D-erythro-1-(imidazol-4-yl)glycerol 3-phosphate + 5-amino-1-(5-phospho-beta-D-ribosyl)imidazole-4-carboxamide + L-glutamate + H(+). It participates in amino-acid biosynthesis; L-histidine biosynthesis; L-histidine from 5-phospho-alpha-D-ribose 1-diphosphate: step 5/9. Its function is as follows. IGPS catalyzes the conversion of PRFAR and glutamine to IGP, AICAR and glutamate. The HisF subunit catalyzes the cyclization activity that produces IGP and AICAR from PRFAR using the ammonia provided by the HisH subunit. The polypeptide is Imidazole glycerol phosphate synthase subunit HisF (Chlorobaculum parvum (strain DSM 263 / NCIMB 8327) (Chlorobium vibrioforme subsp. thiosulfatophilum)).